Reading from the N-terminus, the 565-residue chain is NAD-dependent malic enzyme (565 aa).

Y104 (proton donor) is an active-site residue. An NAD(+)-binding site is contributed by R157. The Proton acceptor role is filled by K175. Residues E246, D247, and D270 each contribute to the a divalent metal cation site. Positions 270 and 418 each coordinate NAD(+).

Belongs to the malic enzymes family. In terms of assembly, homotetramer. Mg(2+) is required as a cofactor. The cofactor is Mn(2+).

The enzyme catalyses (S)-malate + NAD(+) = pyruvate + CO2 + NADH. It catalyses the reaction oxaloacetate + H(+) = pyruvate + CO2. The chain is NAD-dependent malic enzyme from Salmonella dublin (strain CT_02021853).